Here is a 348-residue protein sequence, read N- to C-terminus: dTDP-glucose 4,6-dehydratase (348 aa).

Residues 15 to 16 (FI), 37 to 40 (DKLT), 62 to 63 (DI), and 82 to 86 (YAAES) each bind NAD(+). Residues Ser-86 and Asn-88 each coordinate substrate. Thr-101 is an NAD(+) binding site. Substrate is bound at residue Thr-125. Asp-126 (proton donor) is an active-site residue. Active-site proton acceptor residues include Glu-127 and Tyr-161. 161–165 (YSSTK) serves as a coordination point for NAD(+). Asn-190 serves as a coordination point for substrate. Asn-191 serves as a coordination point for NAD(+). Substrate-binding positions include 200 to 205 (KFIPRQ), 216 to 218 (KLY), Arg-225, Asn-260, and 283 to 287 (DRAGH).

The protein belongs to the NAD(P)-dependent epimerase/dehydratase family. dTDP-glucose dehydratase subfamily. Homodimer. NAD(+) serves as cofactor.

The enzyme catalyses dTDP-alpha-D-glucose = dTDP-4-dehydro-6-deoxy-alpha-D-glucose + H2O. It participates in carbohydrate biosynthesis; dTDP-L-rhamnose biosynthesis. Catalyzes the dehydration of dTDP-D-glucose to form dTDP-6-deoxy-D-xylo-4-hexulose via a three-step process involving oxidation, dehydration and reduction. The protein is dTDP-glucose 4,6-dehydratase (rmlB) of Streptococcus mutans serotype c (strain ATCC 700610 / UA159).